Here is a 159-residue protein sequence, read N- to C-terminus: Transcription elongation factor GreA (159 aa).

Belongs to the GreA/GreB family.

Its function is as follows. Necessary for efficient RNA polymerase transcription elongation past template-encoded arresting sites. The arresting sites in DNA have the property of trapping a certain fraction of elongating RNA polymerases that pass through, resulting in locked ternary complexes. Cleavage of the nascent transcript by cleavage factors such as GreA or GreB allows the resumption of elongation from the new 3'terminus. GreA releases sequences of 2 to 3 nucleotides. This Orientia tsutsugamushi (strain Boryong) (Rickettsia tsutsugamushi) protein is Transcription elongation factor GreA.